A 458-amino-acid chain; its full sequence is Exodeoxyribonuclease 7 large subunit (458 aa).

Belongs to the XseA family. Heterooligomer composed of large and small subunits.

It localises to the cytoplasm. The enzyme catalyses Exonucleolytic cleavage in either 5'- to 3'- or 3'- to 5'-direction to yield nucleoside 5'-phosphates.. Functionally, bidirectionally degrades single-stranded DNA into large acid-insoluble oligonucleotides, which are then degraded further into small acid-soluble oligonucleotides. This Yersinia enterocolitica serotype O:8 / biotype 1B (strain NCTC 13174 / 8081) protein is Exodeoxyribonuclease 7 large subunit.